The primary structure comprises 179 residues: Apoptosis regulator Bcl-2 homolog (179 aa).

The short motif at 76-95 is the BH1 element; sequence ELFKDLINWGRICGFIVFSA. The BH2 signature appears at 126–141; it reads PWMISHGGQEEFLAFS.

Belongs to the Bcl-2 family. As to quaternary structure, interacts with host BECN1 (via BH3 homology domain); this interaction allows the virus to inhibit BECN1, and thus autophagy. Interacts with host BID. Interacts with host BAX.

Its subcellular location is the host mitochondrion. The protein resides in the host endoplasmic reticulum. Its function is as follows. Suppresses apoptosis in host cell to promote the viral replication. Has the ability to potentially bind to all the members of the proapoptotic Bcl-2 family. Inhibits autophagy by interacting with host Beclin 1 (BECN1). This chain is Apoptosis regulator Bcl-2 homolog, found in Ornithodoros (relapsing fever ticks).